Reading from the N-terminus, the 876-residue chain is ATP-dependent helicase Lhr-Core (876 aa).

7 residues coordinate ATP: glutamine 37, lysine 60, threonine 61, aspartate 175, glutamate 176, arginine 374, and histidine 377. A Helicase ATP-binding domain is found at isoleucine 41–glutamate 232. The DEAH box motif lies at aspartate 175–histidine 178. The Helicase C-terminal domain maps to proline 249–aspartate 421. Residues valine 422 to proline 506 form a WH domain region. Residues aspartate 507–lysine 876 are domain 4.

It belongs to the Lhr helicase family. Lhr-Core subfamily. Monomer.

It carries out the reaction Couples ATP hydrolysis with the unwinding of duplex DNA by translocating in the 3'-5' direction.. The enzyme catalyses ATP + H2O = ADP + phosphate + H(+). Probably part of a 4-gene DNA damage response locus in which the upstream ups system, in combination with this downstream locus, functions in homologous recombination to rescue Sulfolobales from DNA-damaging threats. DNA helicase that translocates in a 3'-5' direction on single-stranded (ss)DNA. Binds Holliday junction (HJ) DNA, Y-shaped DNA, DNA with a 3'-overhang and single-stranded (ss)DNA with high affinity; binds double-stranded (ds)DNA with less affinity. Has helicase activity on DNA with a 3'-overhang, Y-shaped DNA and HJ DNA. Does not unwind blunt-ended dsDNA or DNA with a 5'-overhang. The polypeptide is ATP-dependent helicase Lhr-Core (Sulfolobus acidocaldarius (strain ATCC 33909 / DSM 639 / JCM 8929 / NBRC 15157 / NCIMB 11770)).